Reading from the N-terminus, the 340-residue chain is Mitochondrial amidoxime-reducing component 1 (340 aa).

Gly-2 carries N-myristoyl glycine lipidation. Residues 2–24 (GAGSWALTLFGFSAFRVPGQPRS) are Mitochondrial matrix-facing. Residues 25–44 (TWLGVAALGLAAVALGTVAW) traverse the membrane as a helical; Signal-anchor for type II membrane protein segment. The Cytoplasmic segment spans residues 45-340 (RRARPRRRRR…VGDPVYLLGQ (296 aa)). The Mo-molybdopterin site is built by Lys-70, Ser-71, and Arg-95. The interval 96-186 (FWLVINEEGN…KMQSCRLVHF (91 aa)) is MOSC N-terminal region. The MOSC domain occupies 191–338 (RPRSSRQMKA…IRVGDPVYLL (148 aa)). Residues Ser-214, Arg-241, Asn-243, Thr-274, Arg-275, Cys-276, and Tyr-320 each contribute to the Mo-molybdopterin site.

As to quaternary structure, component of a complex composed of cytochrome b5, NADH-cytochrome b5 reductase and MTARC1. The cofactor is Mo-molybdopterin.

The protein localises to the mitochondrion outer membrane. Its subcellular location is the membrane. It catalyses the reaction N(omega)-hydroxy-L-arginine + 2 Fe(II)-[cytochrome b5] + 2 H(+) = L-arginine + 2 Fe(III)-[cytochrome b5] + H2O. Functionally, catalyzes the reduction of N-oxygenated molecules, acting as a counterpart of cytochrome P450 and flavin-containing monooxygenases in metabolic cycles. As a component of prodrug-converting system, reduces a multitude of N-hydroxylated prodrugs particularly amidoximes, leading to increased drug bioavailability. May be involved in mitochondrial N(omega)-hydroxy-L-arginine (NOHA) reduction, regulating endogenous nitric oxide levels and biosynthesis. Postulated to cleave the N-OH bond of N-hydroxylated substrates in concert with electron transfer from NADH to cytochrome b5 reductase then to cytochrome b5, the ultimate electron donor that primes the active site for substrate reduction. The sequence is that of Mitochondrial amidoxime-reducing component 1 (Mtarc1) from Mus musculus (Mouse).